Here is a 241-residue protein sequence, read N- to C-terminus: Ribulose-phosphate 3-epimerase 1 (241 aa).

Ser-21 is a substrate binding site. His-46, Asp-48, and His-79 together coordinate a divalent metal cation. Catalysis depends on Asp-48, which acts as the Proton acceptor. Substrate-binding positions include His-79, 155-158, 192-194, and 214-215; these read GFGG, DGG, and GS. Asp-192 is an a divalent metal cation binding site. Asp-192 functions as the Proton donor in the catalytic mechanism.

Belongs to the ribulose-phosphate 3-epimerase family. The cofactor is a divalent metal cation.

The catalysed reaction is D-ribulose 5-phosphate = D-xylulose 5-phosphate. It functions in the pathway carbohydrate degradation. In terms of biological role, catalyzes the reversible epimerization of D-ribulose 5-phosphate to D-xylulose 5-phosphate. This chain is Ribulose-phosphate 3-epimerase 1, found in Cupriavidus necator (strain ATCC 17699 / DSM 428 / KCTC 22496 / NCIMB 10442 / H16 / Stanier 337) (Ralstonia eutropha).